The following is a 150-amino-acid chain: NADH-quinone oxidoreductase subunit A (150 aa).

3 consecutive transmembrane segments (helical) span residues 14 to 34 (WAFAVFLIGALGLCSLMLLGA), 70 to 90 (LVAMFFVIFDVEALFLYAWAV), and 98 to 118 (LGFIEAAVFIAILLAGLFYLV).

Belongs to the complex I subunit 3 family. NDH-1 is composed of 13 different subunits. Subunits NuoA, H, J, K, L, M, N constitute the membrane sector of the complex.

The protein resides in the cell inner membrane. The enzyme catalyses a quinone + NADH + 5 H(+)(in) = a quinol + NAD(+) + 4 H(+)(out). Its function is as follows. NDH-1 shuttles electrons from NADH, via FMN and iron-sulfur (Fe-S) centers, to quinones in the respiratory chain. The immediate electron acceptor for the enzyme in this species is believed to be ubiquinone. Couples the redox reaction to proton translocation (for every two electrons transferred, four hydrogen ions are translocated across the cytoplasmic membrane), and thus conserves the redox energy in a proton gradient. This chain is NADH-quinone oxidoreductase subunit A, found in Proteus mirabilis (strain HI4320).